Here is a 382-residue protein sequence, read N- to C-terminus: MSGYTVKPPTGDTNEQTQFIDYFNLFYSKRGQEQISISQQLGNYGTTFFSASRQSYWNTSRSDQQISFGLNVPFGDITTSLNYSYSNNIWQNDRDHLLAFTLNVPFSHWMRTDSQSAFRNSNASYSMSNDLKGGMTNLSGVYGTLLPDNNLNYSVQVGNTHGGNTSSGTSGYSSLNYRGAYGNTNVGYSRSGDSSQIYYGMSGGIIAHADGITFGQPLGDTMVLVKAPGADNVKIENQTGIHTDWRGYAILPFATEYRENRVALNANSLADNVELDETVVTVIPTHGAIARATFNAQIGGKVLMTLKYGNKSVPFGAIVTHGENKNGSIVAENGQVYLTGLPQSGQLQVSWGKDKNSNCIVEYKLPEVSPGTLLNQQTAICR.

This chain is Fimbrial usher domain-containing protein YdeT (ydeT), found in Escherichia coli (strain K12).